A 299-amino-acid polypeptide reads, in one-letter code: Methylsterol monooxygenase 1-2 (299 aa).

3 helical membrane-spanning segments follow: residues cysteine 39–isoleucine 59, phenylalanine 96–isoleucine 116, and serine 118–valine 138. The Fatty acid hydroxylase domain maps to leucine 132 to threonine 267. The short motif at histidine 147–histidine 151 is the Histidine box-1 element. The short motif at histidine 160–histidine 164 is the Histidine box-2 element. The helical transmembrane segment at threonine 189–leucine 209 threads the bilayer. A Histidine box-3 motif is present at residues tyrosine 239–tyrosine 245.

This sequence belongs to the sterol desaturase family. Interacts with ACBP1. It depends on Fe cation as a cofactor. In terms of tissue distribution, expressed in embryo sacs, pollen and trichomes. Observed in leaves, roots, siliques and flowers.

The protein resides in the endoplasmic reticulum membrane. It carries out the reaction 4,4-dimethyl-5alpha-cholest-7-en-3beta-ol + 6 Fe(II)-[cytochrome b5] + 3 O2 + 5 H(+) = 4alpha-carboxy-4beta-methyl-5alpha-cholest-7-ene-3beta-ol + 6 Fe(III)-[cytochrome b5] + 4 H2O. It catalyses the reaction 24-methylenecycloartanol + 6 Fe(II)-[cytochrome b5] + 3 O2 + 5 H(+) = 4alpha-carboxy-4beta,14alpha-dimethyl-9beta,19-cyclo-5alpha-ergost-24(24(1))-en-3beta-ol + 6 Fe(III)-[cytochrome b5] + 4 H2O. Its function is as follows. Non-heme iron oxygenase involved in sterols biosynthesis by catalyzing the removal of the first methyl group at the C-4 position. 4,4-dimethyl-9-beta,19-cyclopropylsterols such as 24-methylenecycloartanol are the preferred substrates. Acts as a rate-limiting enzyme in the sterol pathway via interaction with ACBP1; sterols serve as lipid modulators for gene expression of homeodomain-leucine zipper IV transcription factors. Together with SMO1-1, involved in the maintenance of sterol composition to balance auxin and cytokinin activities during embryogenesis. In Arabidopsis thaliana (Mouse-ear cress), this protein is Methylsterol monooxygenase 1-2.